Consider the following 197-residue polypeptide: Probable GTP-binding protein EngB (197 aa).

The EngB-type G domain occupies N22 to E195. GTP-binding positions include G30–S37, G57–L61, D75–G78, T142–D145, and F174–S176. Mg(2+)-binding residues include S37 and T59.

The protein belongs to the TRAFAC class TrmE-Era-EngA-EngB-Septin-like GTPase superfamily. EngB GTPase family. The cofactor is Mg(2+).

Its function is as follows. Necessary for normal cell division and for the maintenance of normal septation. This Clostridium perfringens (strain 13 / Type A) protein is Probable GTP-binding protein EngB.